The chain runs to 65 residues: Photosystem II reaction center protein J (65 aa).

A compositionally biased stretch (basic and acidic residues) spans 1 to 17 (MSTKLKGPDGRIPDRLP). Positions 1–20 (MSTKLKGPDGRIPDRLPDGT) are disordered. Residues 36–56 (LWLVATVGGMAVLSVLGLFFF) form a helical membrane-spanning segment.

The protein belongs to the PsbJ family. In terms of assembly, PSII is composed of 1 copy each of membrane proteins PsbA, PsbB, PsbC, PsbD, PsbE, PsbF, PsbH, PsbI, PsbJ, PsbK, PsbL, PsbM, PsbT, PsbX, PsbY, Psb30/Ycf12, peripheral proteins PsbO, CyanoQ (PsbQ), PsbU, PsbV and a large number of cofactors. It forms dimeric complexes.

Its subcellular location is the cellular thylakoid membrane. One of the components of the core complex of photosystem II (PSII). PSII is a light-driven water:plastoquinone oxidoreductase that uses light energy to abstract electrons from H(2)O, generating O(2) and a proton gradient subsequently used for ATP formation. It consists of a core antenna complex that captures photons, and an electron transfer chain that converts photonic excitation into a charge separation. This is Photosystem II reaction center protein J from Prochlorococcus marinus (strain MIT 9303).